The chain runs to 134 residues: Ribosome-binding factor A (134 aa).

It belongs to the RbfA family. Monomer. Binds 30S ribosomal subunits, but not 50S ribosomal subunits or 70S ribosomes.

It is found in the cytoplasm. Its function is as follows. One of several proteins that assist in the late maturation steps of the functional core of the 30S ribosomal subunit. Associates with free 30S ribosomal subunits (but not with 30S subunits that are part of 70S ribosomes or polysomes). Required for efficient processing of 16S rRNA. May interact with the 5'-terminal helix region of 16S rRNA. The chain is Ribosome-binding factor A from Sinorhizobium medicae (strain WSM419) (Ensifer medicae).